We begin with the raw amino-acid sequence, 250 residues long: Malonyl-[acyl-carrier protein] O-methyltransferase (250 aa).

The protein belongs to the methyltransferase superfamily.

The catalysed reaction is malonyl-[ACP] + S-adenosyl-L-methionine = malonyl-[ACP] methyl ester + S-adenosyl-L-homocysteine. The protein operates within cofactor biosynthesis; biotin biosynthesis. In terms of biological role, converts the free carboxyl group of a malonyl-thioester to its methyl ester by transfer of a methyl group from S-adenosyl-L-methionine (SAM). It allows to synthesize pimeloyl-ACP via the fatty acid synthetic pathway. In Neorickettsia risticii (strain Illinois), this protein is Malonyl-[acyl-carrier protein] O-methyltransferase.